The primary structure comprises 354 residues: MNGTEGPYFYIPMLNTTGVVRSPYEYPQYYLVNPAAYAVLGAYMFFLILVGFPINFLTLYVTIEHKKLRTPLNYILLNLAVADLFMVFGGFTTTIYTSMHGYFVLGRLGCNVEGFSATLGGEIALWSLVVLAIERWVVVCKPISNFRFGENHAIMGVAFTWFMAAACAVPPLFGWSRYIPEGMQCSCGIDYYTRAEGFNNESFVIYMFTCHFCIPLMVVFFCYGRLVCAVKEAAAAQQESETTQRAEREVTRMVIIMVVSFLVSWVPYASVAWYIFTHQGSEFGPLFMTIPAFFAKSSSIYNPMIYICMNKQFRHCMITTLCCGKNPFEEEEGASSTASKTEASSVSSSSVSPA.

The Extracellular portion of the chain corresponds to Met1–Ala36. Residues Asn2 and Asn15 are each glycosylated (N-linked (GlcNAc...) asparagine). A helical membrane pass occupies residues Tyr37–Val61. Residues Thr62–Asn73 are Cytoplasmic-facing. A helical transmembrane segment spans residues Tyr74 to Tyr96. Residues Thr97 to Cys110 lie on the Extracellular side of the membrane. Cys110 and Cys187 form a disulfide bridge. Residues Asn111 to Ile133 traverse the membrane as a helical segment. Residues Glu134–Trp136 carry the 'Ionic lock' involved in activated form stabilization motif. Over Glu134–His152 the chain is Cytoplasmic. Residues Ala153–Phe173 traverse the membrane as a helical segment. At Gly174–Ser202 the chain is on the extracellular side. Asn200 carries N-linked (GlcNAc...) asparagine glycosylation. A helical transmembrane segment spans residues Phe203–Gly224. Residues Arg225–Arg252 lie on the Cytoplasmic side of the membrane. Residues Met253–Tyr274 form a helical membrane-spanning segment. Over Ile275–Leu286 the chain is Extracellular. A helical membrane pass occupies residues Phe287–Cys308. At Lys296 the chain carries N6-(retinylidene)lysine. Topologically, residues Met309–Ala354 are cytoplasmic. S-palmitoyl cysteine attachment occurs at residues Cys322 and Cys323. Residues Glu329–Ala354 are disordered. Positions Ala334–Ala354 are enriched in low complexity.

This sequence belongs to the G-protein coupled receptor 1 family. Opsin subfamily. Post-translationally, phosphorylated on some or all of the serine and threonine residues present in the C-terminal region. Contains one covalently linked retinal chromophore.

The protein localises to the membrane. Its subcellular location is the cell projection. The protein resides in the cilium. It is found in the photoreceptor outer segment. Functionally, photoreceptor required for image-forming vision at low light intensity. While most salt water fish species use retinal as chromophore, most freshwater fish use 3-dehydroretinal, or a mixture of retinal and 3-dehydroretinal. Light-induced isomerization of 11-cis to all-trans retinal triggers a conformational change that activates signaling via G-proteins. Subsequent receptor phosphorylation mediates displacement of the bound G-protein alpha subunit by arrestin and terminates signaling. In Atherina boyeri (Big-scale sand smelt), this protein is Rhodopsin (rho).